Here is a 169-residue protein sequence, read N- to C-terminus: Ribosome maturation factor RimM (169 aa).

The PRC barrel domain maps to 97–169 (EDEYYWTDLV…TITADWGLDY (73 aa)).

This sequence belongs to the RimM family. Binds ribosomal protein uS19.

The protein localises to the cytoplasm. Its function is as follows. An accessory protein needed during the final step in the assembly of 30S ribosomal subunit, possibly for assembly of the head region. Essential for efficient processing of 16S rRNA. May be needed both before and after RbfA during the maturation of 16S rRNA. It has affinity for free ribosomal 30S subunits but not for 70S ribosomes. This chain is Ribosome maturation factor RimM, found in Neisseria meningitidis serogroup B (strain ATCC BAA-335 / MC58).